A 330-amino-acid polypeptide reads, in one-letter code: Polyprenal reductase (330 aa).

At 1-19 the chain is on the cytoplasmic side; sequence MASWVGTELSALNPLRTLW. A helical membrane pass occupies residues 20–40; it reads LALAAAFLLALLLQLAPAGLL. Residues 41–74 are Lumenal-facing; that stretch reads PNCALFQDLIRYGKTKLSGPRRPAVCRAFDVPKR. Residues 75 to 95 form a helical membrane-spanning segment; that stretch reads YFSHFYVVSVLWNGFLLWFLS. At 96–132 the chain is on the cytoplasmic side; it reads RSLFLGAPFPNWLRALLRTLGSTQFRALEMESKASQM. A helical membrane pass occupies residues 133–153; the sequence is LVGELALSAFLVLVFLWVHSV. The Lumenal portion of the chain corresponds to 154–168; sequence RRLFECFYISVFSNA. Residues 169 to 189 traverse the membrane as a helical segment; the sequence is VMHVVQYCFGLVYYVLVGLTV. The Cytoplasmic segment spans residues 190 to 206; it reads LSQVPMDDKNVYMLGKN. The helical transmembrane segment at 207-227 threads the bilayer; that stretch reads LLLPARWFHVLGMMMFLWSSA. Over 228–277 the chain is Lumenal; the sequence is HQYECHVILSNLRRNKKGAIVHCQHRIPFGDWFEYVSSANYLAELMIYIS. The helical transmembrane segment at 278–298 threads the bilayer; it reads MAVTFGFHNFTWWLVVAYVFF. The Cytoplasmic portion of the chain corresponds to 299–330; sequence CQALSAFFNHKFYKSTFVSYPKHRKAFLPFLF.

It belongs to the steroid 5-alpha reductase family. Polyprenal reductase subfamily.

It localises to the endoplasmic reticulum membrane. It carries out the reaction a di-trans,poly-cis-dolichal + NADP(+) = a di-trans,poly-cis-polyprenal + NADPH + H(+). It catalyses the reaction a 3-oxo-5alpha-steroid + NADP(+) = a 3-oxo-Delta(4)-steroid + NADPH + H(+). The enzyme catalyses androst-4-ene-3,17-dione + NADPH + H(+) = 5alpha-androstan-3,17-dione + NADP(+). The catalysed reaction is 17beta-hydroxy-5alpha-androstan-3-one + NADP(+) = testosterone + NADPH + H(+). It functions in the pathway protein modification; protein glycosylation. In terms of biological role, plays a key role in early steps of protein N-linked glycosylation by being involved in the conversion of polyprenol into dolichol. Acts as a polyprenal reductase that mediates the reduction of polyprenal into dolichal in a NADP-dependent mechanism. Dolichols are required for the synthesis of dolichol-linked monosaccharides and the oligosaccharide precursor used for N-glycosylation. Also able to convert testosterone (T) into 5-alpha-dihydrotestosterone (DHT). The sequence is that of Polyprenal reductase from Mesocricetus auratus (Golden hamster).